A 313-amino-acid polypeptide reads, in one-letter code: Pantothenate synthetase (313 aa).

43-50 (MGALHEGH) is a binding site for ATP. H50 serves as the catalytic Proton donor. Position 75 (Q75) interacts with (R)-pantoate. Q75 serves as a coordination point for beta-alanine. 161–164 (GEKD) contacts ATP. (R)-pantoate is bound at residue Q167. ATP contacts are provided by residues V190 and 198-201 (LSSR).

This sequence belongs to the pantothenate synthetase family. Homodimer.

It is found in the cytoplasm. It catalyses the reaction (R)-pantoate + beta-alanine + ATP = (R)-pantothenate + AMP + diphosphate + H(+). It participates in cofactor biosynthesis; (R)-pantothenate biosynthesis; (R)-pantothenate from (R)-pantoate and beta-alanine: step 1/1. Functionally, catalyzes the condensation of pantoate with beta-alanine in an ATP-dependent reaction via a pantoyl-adenylate intermediate. This Mycobacterium sp. (strain KMS) protein is Pantothenate synthetase.